We begin with the raw amino-acid sequence, 212 residues long: MFTIALPKGALLEDSISIFKRAGLDFSDALEENNRSLTFESNCKRAKALLVRNGDVPVYVSYGQADLGIVGYDVLRESELKVAKLLDLGFGGCHMSLAVKKNSNYSKPTDLPANCKVASKFTKTARSYFDELNIPVEIVHLTGSVELGPITGMAEAIVDLVATGKTLQENGLIKIDDIFYSTARLIGNPLSIRLDDNHLRDTILSIESINAL.

Belongs to the ATP phosphoribosyltransferase family. Short subfamily. In terms of assembly, heteromultimer composed of HisG and HisZ subunits.

The protein resides in the cytoplasm. It catalyses the reaction 1-(5-phospho-beta-D-ribosyl)-ATP + diphosphate = 5-phospho-alpha-D-ribose 1-diphosphate + ATP. It functions in the pathway amino-acid biosynthesis; L-histidine biosynthesis; L-histidine from 5-phospho-alpha-D-ribose 1-diphosphate: step 1/9. Functionally, catalyzes the condensation of ATP and 5-phosphoribose 1-diphosphate to form N'-(5'-phosphoribosyl)-ATP (PR-ATP). Has a crucial role in the pathway because the rate of histidine biosynthesis seems to be controlled primarily by regulation of HisG enzymatic activity. The chain is ATP phosphoribosyltransferase from Prochlorococcus marinus (strain MIT 9312).